A 101-amino-acid polypeptide reads, in one-letter code: NADH-quinone oxidoreductase subunit K (101 aa).

Transmembrane regions (helical) follow at residues 4 to 24, 30 to 50, and 61 to 81; these read LPHY…GIFV, IVIL…LVAF, and IFAM…LAIL.

This sequence belongs to the complex I subunit 4L family. As to quaternary structure, NDH-1 is composed of 14 different subunits. Subunits NuoA, H, J, K, L, M, N constitute the membrane sector of the complex.

The protein localises to the cell inner membrane. It carries out the reaction a quinone + NADH + 5 H(+)(in) = a quinol + NAD(+) + 4 H(+)(out). NDH-1 shuttles electrons from NADH, via FMN and iron-sulfur (Fe-S) centers, to quinones in the respiratory chain. The immediate electron acceptor for the enzyme in this species is believed to be ubiquinone. Couples the redox reaction to proton translocation (for every two electrons transferred, four hydrogen ions are translocated across the cytoplasmic membrane), and thus conserves the redox energy in a proton gradient. The sequence is that of NADH-quinone oxidoreductase subunit K from Caulobacter vibrioides (strain ATCC 19089 / CIP 103742 / CB 15) (Caulobacter crescentus).